The following is a 409-amino-acid chain: Lissencephaly-1 homolog (409 aa).

In terms of domain architecture, LisH spans 7 to 39; the sequence is QREELNQAIADYLGTNGYADSLEAFRKEADLST. Residues 54–81 adopt a coiled-coil conformation; the sequence is TSVIRLQKKVMELEAKLTEAEKEVIEGA. WD repeat units follow at residues 104-145, 146-185, 189-228, 231-270, 273-332, 335-374, and 377-409; these read GHRA…RSLK, GHTDSVQDVAFDAQGKLLVSCSADLSIKLWDFQQSYACVK, GHDHNVSSVAFVPAGDYVLSASRDRTIKMWEVATGYCVKT, GHREWVRMVRVHIEGSLFATCSNDHTIRVWLTNSKDCKVE, DHEH…CLLT, GHDNWVRGLAFHPGGKYLVSASDDKTIRVWDLRNKRCMKT, and AHQHFCTSIDFHKAHPYVISGSVDQTVKVWECR.

Belongs to the WD repeat LIS1/nudF family.

It is found in the cytoplasm. The protein localises to the cytoskeleton. It localises to the microtubule organizing center. The protein resides in the centrosome. Positively regulates the activity of the minus-end directed microtubule motor protein dynein. May enhance dynein-mediated microtubule sliding by targeting dynein to the microtubule plus end. Required for several dynein- and microtubule-dependent processes. This Drosophila willistoni (Fruit fly) protein is Lissencephaly-1 homolog.